We begin with the raw amino-acid sequence, 362 residues long: Molybdenum import ATP-binding protein ModC (362 aa).

The ABC transporter domain maps to 2–236; that stretch reads ASPIEVRLHM…LDLPLAMGGD (235 aa). 34 to 41 lines the ATP pocket; that stretch reads GPSGSGKT. In terms of domain architecture, Mop spans 297–362; the sequence is QSSILNRLPV…AQIKAVAVLA (66 aa).

This sequence belongs to the ABC transporter superfamily. Molybdate importer (TC 3.A.1.8) family. The complex is composed of two ATP-binding proteins (ModC), two transmembrane proteins (ModB) and a solute-binding protein (ModA).

The protein localises to the cell inner membrane. It carries out the reaction molybdate(out) + ATP + H2O = molybdate(in) + ADP + phosphate + H(+). In terms of biological role, part of the ABC transporter complex ModABC involved in molybdenum import. Responsible for energy coupling to the transport system. The protein is Molybdenum import ATP-binding protein ModC of Pseudomonas savastanoi pv. phaseolicola (strain 1448A / Race 6) (Pseudomonas syringae pv. phaseolicola (strain 1448A / Race 6)).